The primary structure comprises 133 residues: Triatox (133 aa).

A signal peptide spans 1–22 (MTTLRVLLAVCCAAYCILAEDV). Positions 23–125 (TVPANGELKL…RAMCTVYSAE (103 aa)) constitute a CUB domain. Cysteine 70 and cysteine 86 are oxidised to a cystine.

The protein belongs to the venom CUB family. Expressed by the venom gland.

It localises to the secreted. Its function is as follows. May function as an antimicrobial peptide and may be related to the innate defense of the insect in the salivary glands. This chain is Triatox, found in Triatoma infestans (Assassin bug).